Here is a 271-residue protein sequence, read N- to C-terminus: Mannosyl-3-phosphoglycerate phosphatase (271 aa).

D13 acts as the Nucleophile in catalysis. Residues D13, D15, and D214 each coordinate Mg(2+).

The protein belongs to the HAD-like hydrolase superfamily. MPGP family. Mg(2+) serves as cofactor.

The protein resides in the cytoplasm. It catalyses the reaction 2-O-(alpha-D-mannosyl)-3-phosphoglycerate + H2O = (2R)-2-O-(alpha-D-mannosyl)-glycerate + phosphate. The sequence is that of Mannosyl-3-phosphoglycerate phosphatase from Escherichia coli (strain SE11).